A 346-amino-acid chain; its full sequence is Aspartate-semialdehyde dehydrogenase (346 aa).

Residues 10 to 13 (TGQG) and 38 to 39 (RS) each bind NADP(+). Arginine 98 contributes to the phosphate binding site. The active-site Acyl-thioester intermediate is cysteine 131. Position 158 (glutamine 158) interacts with substrate. Residue 161-162 (SG) participates in NADP(+) binding. Lysine 228 provides a ligand contact to phosphate. Arginine 250 contributes to the substrate binding site. The active-site Proton acceptor is the histidine 257. Position 326 (asparagine 326) interacts with NADP(+).

This sequence belongs to the aspartate-semialdehyde dehydrogenase family. As to quaternary structure, homodimer.

The catalysed reaction is L-aspartate 4-semialdehyde + phosphate + NADP(+) = 4-phospho-L-aspartate + NADPH + H(+). It participates in amino-acid biosynthesis; L-lysine biosynthesis via DAP pathway; (S)-tetrahydrodipicolinate from L-aspartate: step 2/4. It functions in the pathway amino-acid biosynthesis; L-methionine biosynthesis via de novo pathway; L-homoserine from L-aspartate: step 2/3. Its pathway is amino-acid biosynthesis; L-threonine biosynthesis; L-threonine from L-aspartate: step 2/5. In terms of biological role, catalyzes the NADPH-dependent formation of L-aspartate-semialdehyde (L-ASA) by the reductive dephosphorylation of L-aspartyl-4-phosphate. The chain is Aspartate-semialdehyde dehydrogenase from Mycolicibacterium smegmatis (Mycobacterium smegmatis).